We begin with the raw amino-acid sequence, 344 residues long: tRNA N6-adenosine threonylcarbamoyltransferase (344 aa).

Fe cation is bound by residues His113 and His117. Substrate-binding positions include 135 to 139 (LVSGG), Asp169, Gly182, Asp186, and Asn278. Residue Asp306 coordinates Fe cation. Residues 325 to 344 (ESPISVGTDPSLSVETPQVF) are disordered. A compositionally biased stretch (polar residues) spans 326–344 (SPISVGTDPSLSVETPQVF).

It belongs to the KAE1 / TsaD family. Requires Fe(2+) as cofactor.

The protein resides in the cytoplasm. The catalysed reaction is L-threonylcarbamoyladenylate + adenosine(37) in tRNA = N(6)-L-threonylcarbamoyladenosine(37) in tRNA + AMP + H(+). Required for the formation of a threonylcarbamoyl group on adenosine at position 37 (t(6)A37) in tRNAs that read codons beginning with adenine. Is involved in the transfer of the threonylcarbamoyl moiety of threonylcarbamoyl-AMP (TC-AMP) to the N6 group of A37, together with TsaE and TsaB. TsaD likely plays a direct catalytic role in this reaction. This Corynebacterium glutamicum (strain ATCC 13032 / DSM 20300 / JCM 1318 / BCRC 11384 / CCUG 27702 / LMG 3730 / NBRC 12168 / NCIMB 10025 / NRRL B-2784 / 534) protein is tRNA N6-adenosine threonylcarbamoyltransferase.